Consider the following 226-residue polypeptide: E3 ubiquitin-protein ligase RNF186 (226 aa).

The segment at 39–85 (CLVCREPYSGVRPPKLLGCQHAFCAVCLKLLLCVQDDAWSIPCPLCR) adopts an RING-type zinc-finger fold. Residues 121 to 143 (GLANPATLTAGQPREAGEEEQDA) are disordered. The next 2 helical transmembrane spans lie at 157–177 (HLLLLVLLIILILPFIYPGVI) and 179–199 (WVLSFLETLALLLALLFCSHP).

Interacts with BNIP1. Post-translationally, polyubiquitinated. 'Lys-29' autoubiquitination leads to proteasomal degradation.

It is found in the endoplasmic reticulum membrane. It carries out the reaction S-ubiquitinyl-[E2 ubiquitin-conjugating enzyme]-L-cysteine + [acceptor protein]-L-lysine = [E2 ubiquitin-conjugating enzyme]-L-cysteine + N(6)-ubiquitinyl-[acceptor protein]-L-lysine.. It functions in the pathway protein modification; protein ubiquitination. Functionally, E3 ubiquitin protein ligase that is part of an apoptotic signaling pathway activated by endoplasmic reticulum stress. Stimulates the expression of proteins specific of the unfolded protein response (UPR), ubiquitinates BNIP1 and regulates its localization to the mitochondrion and induces calcium release from the endoplasmic reticulum that ultimately leads to cell apoptosis. Plays a role in the maintenance of intestinal homeostasis and clearance of enteric pathogens. Upon NOD2 stimulation, ubiquitinates the ER stress sensor activating transcription factor 6/ATF6 and promotes the unfolded protein response UPR. Participates in basal level of autophagy maintenance by regulating the ubiquitination of EPHB2. Upon stimulation by ligand EFNB1, ubiquitinates EPHB2 and further recruits MAP1LC3B for autophagy induction. Controls nutrient sensing by ubiquitinating Sestrin-2/SESN2, which is an intracellular sensor of cytosolic leucine and inhibitor of mTORC1 activity. This is E3 ubiquitin-protein ligase RNF186 from Bos taurus (Bovine).